A 419-amino-acid polypeptide reads, in one-letter code: Protein distal antenna-related (419 aa).

Residues 15–66 enclose the HTH psq-type domain; the sequence is TRGKRPLRNLTPNDKVRAIQRIHNGETKASVSRDIGVPESTLRGWCKNEQKL. The H-T-H motif DNA-binding region spans 42-62; that stretch reads KASVSRDIGVPESTLRGWCKN. Disordered stretches follow at residues 333-359 and 378-419; these read QPGG…PDLE and EASN…DAEQ.

In terms of assembly, interacts with itself, dan, ey and dac to form a complex (or complexes) containing the RD factors. As to expression, coexpressed with dan in the presumptive distal antenna, but not in the leg imaginal disk. Both proteins are also expressed in the brain and the eye region of the eye-antenna disk. First detected in early L3 eye disks in cells surrounding the newly initiated morphogenetic furrow. Highly expressed in evenly spaced clusters of cells anterior to the furrow, lower levels within and posterior to the furrow.

It localises to the nucleus. In terms of biological role, probable transcription factor with a role in the retinal determination (RD) network. Regulates ato expression and is required for normal R8 induction and differentiation. Danr appears to repress Dan expression, but Dan is required for Danr expression anterior to the morphogenetic furrow (MF). Dan and Danr lie downstream of so and require dac function for highest levels of expression. Contributes to differentiation of antenna-specific characteristics; effector gene that acts downstream of homothorax (hth), Distal-less (Dll), cut (ct) and spineless (ss) genes to control differentiation of distal antennal structures. The protein is Protein distal antenna-related of Drosophila melanogaster (Fruit fly).